The chain runs to 177 residues: Interleukin-19 (177 aa).

The N-terminal stretch at 1 to 24 (MKLQCVSLWLLGTILILCSVDNHG) is a signal peptide. Disulfide bonds link Cys28-Cys121, Cys75-Cys127, and Cys76-Cys129. The N-linked (GlcNAc...) asparagine glycan is linked to Asn56. Asn135 is a glycosylation site (N-linked (GlcNAc...) asparagine).

It belongs to the IL-10 family.

The protein resides in the secreted. Cytokine that functions as an anti-inflammatory and proangiogenic factor. Polarizes adaptive immunity to an anti-inflammatory phenotype through induction of T-helper 2 responses by both down-regulation of IFN-gamma and up-regulation of IL4 and IL13. Produced by osteocytes, stimulates granulopoiesis and neutrophil formation. Exerts its biological effect through a receptor complex consisting of a heterodimer of IL20RA and IL20RB. In turn, activates the Janus kinase (JAK) and signal transducer and activator of transcription (STAT) pathway, and importantly, STAT3. The chain is Interleukin-19 (IL19) from Homo sapiens (Human).